The chain runs to 323 residues: Acetyl esterase (323 aa).

The short motif at 91–93 (HGG) is the Involved in the stabilization of the negatively charged intermediate by the formation of the oxyanion hole element. Catalysis depends on residues Ser165, Asp262, and His292.

Belongs to the 'GDXG' lipolytic enzyme family. As to quaternary structure, homodimer. Interacts with MalT and MelA.

The protein localises to the cytoplasm. Displays esterase activity towards short chain fatty esters (acyl chain length of up to 8 carbons). Able to hydrolyze triacetylglycerol (triacetin) and tributyrylglycerol (tributyrin), but not trioleylglycerol (triolein) or cholesterol oleate. Negatively regulates MalT activity by antagonizing maltotriose binding. Inhibits MelA galactosidase activity. The polypeptide is Acetyl esterase (Salmonella dublin (strain CT_02021853)).